We begin with the raw amino-acid sequence, 173 residues long: PTS system glucose-specific EIIA component (173 aa).

Residues 40 to 144 enclose the PTS EIIA type-1 domain; sequence DPTFAQKMMG…STVTPVVVTN (105 aa). Histidine 77 and histidine 92 together coordinate Zn(2+). The active-site Tele-phosphohistidine intermediate; for EIIA activity is the histidine 92. Phosphohistidine; by HPr is present on histidine 92.

As to quaternary structure, heterodimer with glycerol kinase (glpk). The cofactor is Zn(2+).

The protein resides in the cytoplasm. In terms of biological role, the phosphoenolpyruvate-dependent sugar phosphotransferase system (sugar PTS), a major carbohydrate active transport system, catalyzes the phosphorylation of incoming sugar substrates concomitantly with their translocation across the cell membrane. The enzyme II complex composed of PtsG and Crr is involved in glucose transport. The chain is PTS system glucose-specific EIIA component (crr) from Halalkalibacterium halodurans (strain ATCC BAA-125 / DSM 18197 / FERM 7344 / JCM 9153 / C-125) (Bacillus halodurans).